The sequence spans 290 residues: Eukaryotic translation initiation factor 3 subunit G (290 aa).

2 disordered regions span residues 1 to 35 (MSRL…DGTK) and 157 to 200 (ESTG…GERM). One can recognise an RRM domain in the interval 210 to 288 (ATLRVTNVSE…LILRVEFAKR (79 aa)).

The protein belongs to the eIF-3 subunit G family. In terms of assembly, component of the eukaryotic translation initiation factor 3 (eIF-3) complex.

Its subcellular location is the cytoplasm. Functionally, RNA-binding component of the eukaryotic translation initiation factor 3 (eIF-3) complex, which is involved in protein synthesis of a specialized repertoire of mRNAs and, together with other initiation factors, stimulates binding of mRNA and methionyl-tRNAi to the 40S ribosome. The eIF-3 complex specifically targets and initiates translation of a subset of mRNAs involved in cell proliferation. This subunit can bind 18S rRNA. The polypeptide is Eukaryotic translation initiation factor 3 subunit G (tif35) (Aspergillus clavatus (strain ATCC 1007 / CBS 513.65 / DSM 816 / NCTC 3887 / NRRL 1 / QM 1276 / 107)).